A 474-amino-acid chain; its full sequence is Ankyrin repeat, SAM and basic leucine zipper domain-containing protein 1 (474 aa).

A disordered region spans residues 1–31 (MAGRLRGPAVPGGGESSDSDEDGWDIGYTER). 3 positions are modified to phosphoserine: S16, S17, and S19. ANK repeat units lie at residues 43–72 (EKDEVLKRALTTGDGSLLEELLNSGMQVDS), 76–105 (FGWTPLMYAASIANVDLVRILLDRGANASF), 108–142 (DQHTVLMAACSARVPEERILKTAELLLSRNASPNA), 146–175 (KRMSPLMYAAREGHSQLVALLVGHGAEINA), 179–208 (NGYTALAWAARHGHKTTVLKLLELGADKTL), and 212–241 (DGKTPAEIAKRNKHPELFSMLSLTLNPLHG). Positions 270 to 333 (SYSAFGDLEI…KIMDAVEELQ (64 aa)) constitute an SAM domain.

Interacts with DDX4, PIWIL1, RANBP9 and TDRD1.

The protein localises to the cytoplasm. In terms of biological role, plays a central role during spermatogenesis by repressing transposable elements and preventing their mobilization, which is essential for the germline integrity. Acts via the piRNA metabolic process, which mediates the repression of transposable elements during meiosis by forming complexes composed of piRNAs and Piwi proteins and governs the methylation and subsequent repression of transposons. Its association with pi-bodies suggests a participation in the primary piRNAs metabolic process. Required prior to the pachytene stage to facilitate the production of multiple types of piRNAs, including those associated with repeats involved in the regulation of retrotransposons. May act by mediating protein-protein interactions during germ cell maturation. The protein is Ankyrin repeat, SAM and basic leucine zipper domain-containing protein 1 (ASZ1) of Ornithorhynchus anatinus (Duckbill platypus).